The sequence spans 345 residues: Nuclear distribution protein nudE-like 1 (345 aa).

Positions 28–190 (QSFQEARDEL…LAVRERQQEV (163 aa)) form a coiled coil. Residues 56 to 166 (VQAEQRNRDL…LDEKESLLVS (111 aa)) are self-association. Residues 64–189 (DLQADNQRLK…ELAVRERQQE (126 aa)) are interaction with KATNB1. Positions 114 to 133 (YVRELEQANDDLERAKRATI) are required for interaction with PAFAH1B1. The segment at 175 to 345 (RDLRQELAVR…SAPGMLPLSV (171 aa)) is interaction with CENPF. Positions 189–256 (EVTRKSAPSS…SARISALNIV (68 aa)) are interaction with YWHAE. Residues 191 to 345 (TRKSAPSSPT…SAPGMLPLSV (155 aa)) are interaction with NEFL. Residues 195 to 256 (APSSPTLDCE…SARISALNIV (62 aa)) are interaction with KATNA1. S215 is modified (phosphoserine). T219 is subject to Phosphothreonine; by CDK1 and MAPK1. S231 is modified (phosphoserine). An interaction with DISC1 region spans residues 241-280 (TSPLTPSARISALNIVGDLLRKVGALESKLAACRNFAKDQ). S242 carries the phosphoserine; by CDK1 modification. T245 is subject to Phosphothreonine; by CDK1 and MAPK1. Residues 256–291 (VGDLLRKVGALESKLAACRNFAKDQASRKSYISGNV) form a required for localization to the centrosome and interaction with dynein, dynactin, tubulin gamma, PCM1 and PCNT region. A lipid anchor (S-palmitoyl cysteine; by ZDHHC2, ZDHHC3 and ZDHHC7) is attached at C273. The tract at residues 315-345 (GAVNGFDPAPPPPGLGSSRPSSAPGMLPLSV) is disordered. The span at 329–339 (LGSSRPSSAPG) shows a compositional bias: low complexity. S344 is modified (phosphoserine).

This sequence belongs to the nudE family. As to quaternary structure, self-associates. Interacts with DISC1, dynein, dynactin, tubulin gamma, KATNA1, KATNB1, microtubules, PAFAH1B1, PCM1, PCNT, and YWHAE. Interacts directly with NEFL and indirectly with NEFH. Interacts (via C-terminus) with CENPF. Interacts with ZNF365. Interacts with PLEKHM1 (via N- and C-terminus). Interacts with GTP-bound RAB9A; the interaction may lead to RAB9A-dynein motor tethering. In terms of processing, phosphorylated in mitosis. Can be phosphorylated by CDK1, CDK5 and MAPK1. Phosphorylation by CDK5 promotes interaction with KATNA1 and YWHAE. Post-translationally, palmitoylation at Cys-273 reduces affinity for dynein.

The protein localises to the cytoplasm. It is found in the cytoskeleton. The protein resides in the microtubule organizing center. It localises to the centrosome. Its subcellular location is the chromosome. The protein localises to the centromere. It is found in the kinetochore. The protein resides in the spindle. Required for organization of the cellular microtubule array and microtubule anchoring at the centrosome. May regulate microtubule organization at least in part by targeting the microtubule severing protein KATNA1 to the centrosome. Also positively regulates the activity of the minus-end directed microtubule motor protein dynein. May enhance dynein-mediated microtubule sliding by targeting dynein to the microtubule plus ends. Required for several dynein- and microtubule-dependent processes such as the maintenance of Golgi integrity, the centripetal motion of secretory vesicles and the coupling of the nucleus and centrosome. Also required during brain development for the migration of newly formed neurons from the ventricular/subventricular zone toward the cortical plate. Plays a role, together with DISC1, in the regulation of neurite outgrowth. Required for mitosis in some cell types but appears to be dispensible for mitosis in cortical neuronal progenitors, which instead requires NDE1. Facilitates the polymerization of neurofilaments from the individual subunits NEFH and NEFL. Positively regulates lysosome peripheral distribution and ruffled border formation in osteoclasts. Plays a role, together with DISC1, in the regulation of neurite outgrowth. May act as a RAB9A/B effector that tethers RAB9-associated late endosomes to the dynein motor for their retrograde transport to the trans-Golgi network. The sequence is that of Nuclear distribution protein nudE-like 1 (NDEL1) from Pongo abelii (Sumatran orangutan).